The chain runs to 1204 residues: Probable cation-transporting ATPase 13A4 (1204 aa).

At 1-32 (MGENPAKSHYAQLNLGEENEMEIFGYKTQCCR) the chain is on the cytoplasmic side. A helical membrane pass occupies residues 33–53 (KALCIAGYILSCGALLLLFYW). Topologically, residues 54–219 (KPEWDVWANC…FSVCLWFAED (166 aa)) are extracellular. The chain crosses the membrane as a helical span at residues 220 to 242 (YMEYAAAIIIMSPLSISLTVYDL). The Cytoplasmic portion of the chain corresponds to 243-397 (RQQSVKLQRL…NFRLYRDALR (155 aa)). Residues 398–418 (FLMCLIAFAAIGMIYTVCVFA) form a helical membrane-spanning segment. Topologically, residues 419-433 (LNGEEAGEVVKKALD) are extracellular. Residues 434-454 (VITIAVPPALPAALTTGIIYT) traverse the membrane as a helical segment. Over 455–897 (QRRLKKKGIF…REGRAALVTS (443 aa)) the chain is Cytoplasmic. The active-site 4-aspartylphosphate intermediate is D483. Residues D845 and D849 each contribute to the Mg(2+) site. Residues 898 to 918 (FCMFKYMALYSTIQYLGVLLL) traverse the membrane as a helical segment. Topologically, residues 919–929 (YWQLNSFGNYQ) are extracellular. The helical transmembrane segment at 930–950 (FLFQDLAITTVIGMTMSFTEA) threads the bilayer. Over 951 to 967 (YPKLVPYRPPSQLVSPP) the chain is Cytoplasmic. The chain crosses the membrane as a helical span at residues 968-988 (LLLSVILNILFSLGMQILGFL). Over 989-1043 (MVQKQPWYSKTDIHSACLSVNNHVENSSSASSLGLHGVGGGDPTEVDNGYKSYEN) the chain is Extracellular. The helical transmembrane segment at 1044–1064 (TTVWLLSTINCLIIALVFSKG) threads the bilayer. Topologically, residues 1065 to 1075 (KPFRQPIYTNY) are cytoplasmic. A helical transmembrane segment spans residues 1076–1096 (VFIMVLVGQLGVCLFLVFADI). Residues 1097–1113 (DDLYSKMDLVCTPTTWR) lie on the Extracellular side of the membrane. The chain crosses the membrane as a helical span at residues 1114 to 1134 (ISMVMMLAVTLAVSFLVEEAI). At 1135 to 1204 (IENRALWLWL…PTFDSNEDAL (70 aa)) the chain is on the cytoplasmic side.

It belongs to the cation transport ATPase (P-type) (TC 3.A.3) family. Type V subfamily.

The protein localises to the membrane. The enzyme catalyses ATP + H2O = ADP + phosphate + H(+). The chain is Probable cation-transporting ATPase 13A4 (ATP13A4) from Gallus gallus (Chicken).